Here is a 404-residue protein sequence, read N- to C-terminus: tRNA/tmRNA (uracil-C(5))-methyltransferase (404 aa).

S-adenosyl-L-methionine contacts are provided by Gln-218, Tyr-251, Asn-256, Glu-272, and Asp-332. Catalysis depends on Cys-358, which acts as the Nucleophile. Glu-392 functions as the Proton acceptor in the catalytic mechanism.

It belongs to the class I-like SAM-binding methyltransferase superfamily. RNA M5U methyltransferase family. TrmA subfamily.

The catalysed reaction is uridine(54) in tRNA + S-adenosyl-L-methionine = 5-methyluridine(54) in tRNA + S-adenosyl-L-homocysteine + H(+). It carries out the reaction uridine(341) in tmRNA + S-adenosyl-L-methionine = 5-methyluridine(341) in tmRNA + S-adenosyl-L-homocysteine + H(+). In terms of biological role, dual-specificity methyltransferase that catalyzes the formation of 5-methyluridine at position 54 (m5U54) in all tRNAs, and that of position 341 (m5U341) in tmRNA (transfer-mRNA). The sequence is that of tRNA/tmRNA (uracil-C(5))-methyltransferase from Helicobacter hepaticus (strain ATCC 51449 / 3B1).